Reading from the N-terminus, the 93-residue chain is Acylphosphatase (93 aa).

The region spanning 3–93 is the Acylphosphatase-like domain; the sequence is KQQYFISGKV…FQFNNFKIYY (91 aa). Active-site residues include R18 and N36.

The protein belongs to the acylphosphatase family.

It catalyses the reaction an acyl phosphate + H2O = a carboxylate + phosphate + H(+). This is Acylphosphatase (acyP) from Borrelia garinii subsp. bavariensis (strain ATCC BAA-2496 / DSM 23469 / PBi) (Borreliella bavariensis).